The chain runs to 170 residues: Acireductone dioxygenase (170 aa).

H99, H101, E105, and H144 together coordinate Fe(2+). The Ni(2+) site is built by H99, H101, E105, and H144.

Belongs to the acireductone dioxygenase (ARD) family. Monomer. Fe(2+) serves as cofactor. Ni(2+) is required as a cofactor.

It carries out the reaction 1,2-dihydroxy-5-(methylsulfanyl)pent-1-en-3-one + O2 = 3-(methylsulfanyl)propanoate + CO + formate + 2 H(+). It catalyses the reaction 1,2-dihydroxy-5-(methylsulfanyl)pent-1-en-3-one + O2 = 4-methylsulfanyl-2-oxobutanoate + formate + 2 H(+). It participates in amino-acid biosynthesis; L-methionine biosynthesis via salvage pathway; L-methionine from S-methyl-5-thio-alpha-D-ribose 1-phosphate: step 5/6. Its function is as follows. Catalyzes 2 different reactions between oxygen and the acireductone 1,2-dihydroxy-3-keto-5-methylthiopentene (DHK-MTPene) depending upon the metal bound in the active site. Fe-containing acireductone dioxygenase (Fe-ARD) produces formate and 2-keto-4-methylthiobutyrate (KMTB), the alpha-ketoacid precursor of methionine in the methionine recycle pathway. Ni-containing acireductone dioxygenase (Ni-ARD) produces methylthiopropionate, carbon monoxide and formate, and does not lie on the methionine recycle pathway. The protein is Acireductone dioxygenase of Bacillus cereus (strain ATCC 10987 / NRS 248).